The chain runs to 226 residues: NADH-quinone oxidoreductase subunit B 2 (226 aa).

The [4Fe-4S] cluster site is built by Cys37, Cys38, Cys103, and Cys132.

It belongs to the complex I 20 kDa subunit family. As to quaternary structure, NDH-1 is composed of 14 different subunits. Subunits NuoB, C, D, E, F, and G constitute the peripheral sector of the complex. The cofactor is [4Fe-4S] cluster.

Its subcellular location is the cell membrane. It catalyses the reaction a quinone + NADH + 5 H(+)(in) = a quinol + NAD(+) + 4 H(+)(out). Its function is as follows. NDH-1 shuttles electrons from NADH, via FMN and iron-sulfur (Fe-S) centers, to quinones in the respiratory chain. The immediate electron acceptor for the enzyme in this species is believed to be a menaquinone. Couples the redox reaction to proton translocation (for every two electrons transferred, four hydrogen ions are translocated across the cytoplasmic membrane), and thus conserves the redox energy in a proton gradient. This Salinispora arenicola (strain CNS-205) protein is NADH-quinone oxidoreductase subunit B 2.